The chain runs to 196 residues: Ribosome maturation factor RimP (196 aa).

A compositionally biased stretch (basic residues) spans 131–145; that stretch reads KKKAGKKSQGKKAGK. The tract at residues 131–153 is disordered; sequence KKKAGKKSQGKKAGKKTPQAPVQ.

The protein belongs to the RimP family.

It is found in the cytoplasm. Required for maturation of 30S ribosomal subunits. The polypeptide is Ribosome maturation factor RimP (Corynebacterium urealyticum (strain ATCC 43042 / DSM 7109)).